A 433-amino-acid chain; its full sequence is Enolase (433 aa).

Gln164 is a (2R)-2-phosphoglycerate binding site. Glu206 acts as the Proton donor in catalysis. Asp243, Glu289, and Asp316 together coordinate Mg(2+). (2R)-2-phosphoglycerate contacts are provided by Lys341, Arg370, Ser371, and Lys392. Lys341 acts as the Proton acceptor in catalysis.

This sequence belongs to the enolase family. Mg(2+) serves as cofactor.

The protein localises to the cytoplasm. It localises to the secreted. The protein resides in the cell surface. It catalyses the reaction (2R)-2-phosphoglycerate = phosphoenolpyruvate + H2O. It participates in carbohydrate degradation; glycolysis; pyruvate from D-glyceraldehyde 3-phosphate: step 4/5. Functionally, catalyzes the reversible conversion of 2-phosphoglycerate (2-PG) into phosphoenolpyruvate (PEP). It is essential for the degradation of carbohydrates via glycolysis. The polypeptide is Enolase (Borrelia hermsii (strain HS1 / DAH)).